The chain runs to 387 residues: Exodeoxyribonuclease 7 large subunit (387 aa).

The protein belongs to the XseA family. Heterooligomer composed of large and small subunits.

Its subcellular location is the cytoplasm. It catalyses the reaction Exonucleolytic cleavage in either 5'- to 3'- or 3'- to 5'-direction to yield nucleoside 5'-phosphates.. In terms of biological role, bidirectionally degrades single-stranded DNA into large acid-insoluble oligonucleotides, which are then degraded further into small acid-soluble oligonucleotides. The protein is Exodeoxyribonuclease 7 large subunit of Parasynechococcus marenigrum (strain WH8102).